Consider the following 105-residue polypeptide: Saimiri transformation-associated protein (105 aa).

The Cytoplasmic segment spans residues 1-75; the sequence is MASEPNLRYP…GPPGPSGLPG (75 aa). Positions 1–75 are disordered; it reads MASEPNLRYP…GPPGPSGLPG (75 aa). Positions 15–74 constitute a Collagen-like domain; sequence GDRGPQGPPGPPGPQGPPGPQGPPGPQGPPGPQGPPGPQGPPGPQGPPGPPGPPGPSGLP. Pro residues predominate over residues 20–71; it reads QGPPGPPGPQGPPGPQGPPGPQGPPGPQGPPGPQGPPGPQGPPGPPGPPGPS. The helical transmembrane segment at 76 to 96 threads the bilayer; it reads LFVTNLLLGIIILLLLIIVAI. The Extracellular portion of the chain corresponds to 97–105; the sequence is LLVSKLVVN.

As to quaternary structure, binds to host RAS and TRAF2.

The protein localises to the host membrane. In terms of biological role, acts synergistically with Tip to stimulate NF-kappa-B activity and interleukin-2 gene expression by binding to host TRAF proteins. Activation of NF-kappa-B protects lymphocytes from apoptosis, thereby facilitating viral induced cell transformation. The chain is Saimiri transformation-associated protein from Saimiriine herpesvirus 2 (strain 484-77) (SaHV-2).